The primary structure comprises 560 residues: MTILLEEKEKLTFECETGNYHTFCPISCVSWLYQKIEDSFFLVIGTKTCGYFLQNALGVMIFAEPRYAMAELEESDISAKLNDYKELKRLCFQIKEDRNPSVIVWIGTCTTEIIKMDLEGMAPELERELGIPIVVARANGLDYAFTQGEDTVLAAMAQRCPSLPLNVEEKSQNSLFNQSSNSPENLKTLNTKKDTFQNSTENSKTFSAEKKKTQNPFEFFKSLEEFFPSFSIQNNKKETILSKNSFVPFVEVEKNMYPLESSENSKAESFYHLLREGEQTNQNSELVKPKLVLFGSLPNTVATQLKLELNRQGIEISGWLPSTRYSDLPILDTNTYVCGVNPFLSRTATTLMRRRKCKLISAPFPIGPDGTKAWIEKICSIYGKKPIGLEERETKIWEGLEDSLKLVRGKSVFFMGDNLLEISLARFLIRCGMIVYEIGIPYLDQRFQAAELALLEKTCFEMNVPVPRIVEKPDNYYQISRIRELQPDLVITGMAHANPLEARNITTKWSVEFTFAQIHGFTNAREILDLVTRPLRRNQNINSFSEFFGSTTSTFVQNQF.

Cysteine 24, cysteine 49, and cysteine 109 together coordinate [4Fe-4S] cluster. Residues 173–182 are compositionally biased toward low complexity; it reads NSLFNQSSNS. A disordered region spans residues 173 to 210; that stretch reads NSLFNQSSNSPENLKTLNTKKDTFQNSTENSKTFSAEK. Over residues 196-206 the composition is skewed to polar residues; sequence FQNSTENSKTF.

This sequence belongs to the BchN/ChlN family. Protochlorophyllide reductase is composed of three subunits; ChlL, ChlN and ChlB. Forms a heterotetramer of two ChlB and two ChlN subunits. It depends on [4Fe-4S] cluster as a cofactor.

The protein localises to the plastid. It localises to the chloroplast. It carries out the reaction chlorophyllide a + oxidized 2[4Fe-4S]-[ferredoxin] + 2 ADP + 2 phosphate = protochlorophyllide a + reduced 2[4Fe-4S]-[ferredoxin] + 2 ATP + 2 H2O. It functions in the pathway porphyrin-containing compound metabolism; chlorophyll biosynthesis (light-independent). In terms of biological role, component of the dark-operative protochlorophyllide reductase (DPOR) that uses Mg-ATP and reduced ferredoxin to reduce ring D of protochlorophyllide (Pchlide) to form chlorophyllide a (Chlide). This reaction is light-independent. The NB-protein (ChlN-ChlB) is the catalytic component of the complex. The sequence is that of Light-independent protochlorophyllide reductase subunit N from Tetradesmus obliquus (Green alga).